The chain runs to 159 residues: Ribosome-binding factor A (159 aa).

Composition is skewed to basic and acidic residues over residues 118–128 (AADDEVAKARE) and 137–146 (DPYKEPRVAS). Residues 118–159 (AADDEVAKARENAQPAGDADPYKEPRVASDEDEASPDVREAD) form a disordered region.

Belongs to the RbfA family. As to quaternary structure, monomer. Binds 30S ribosomal subunits, but not 50S ribosomal subunits or 70S ribosomes.

It localises to the cytoplasm. Functionally, one of several proteins that assist in the late maturation steps of the functional core of the 30S ribosomal subunit. Associates with free 30S ribosomal subunits (but not with 30S subunits that are part of 70S ribosomes or polysomes). Required for efficient processing of 16S rRNA. May interact with the 5'-terminal helix region of 16S rRNA. The chain is Ribosome-binding factor A from Rhodococcus erythropolis (strain PR4 / NBRC 100887).